We begin with the raw amino-acid sequence, 458 residues long: Ribulose bisphosphate carboxylase (458 aa).

Position 111 (N111) interacts with substrate. The Proton acceptor role is filled by K166. Residue K168 coordinates substrate. The Mg(2+) site is built by K191, D193, and E194. Position 191 is an N6-carboxylysine (K191). Residue H287 is the Proton acceptor of the active site. Residues R288, H321, and S368 each contribute to the substrate site.

It belongs to the RuBisCO large chain family. Type II subfamily. As to quaternary structure, homodimer. Mg(2+) is required as a cofactor.

The enzyme catalyses 2 (2R)-3-phosphoglycerate + 2 H(+) = D-ribulose 1,5-bisphosphate + CO2 + H2O. It catalyses the reaction D-ribulose 1,5-bisphosphate + O2 = 2-phosphoglycolate + (2R)-3-phosphoglycerate + 2 H(+). Its function is as follows. RuBisCO catalyzes two reactions: the carboxylation of D-ribulose 1,5-bisphosphate, the primary event in carbon dioxide fixation, as well as the oxidative fragmentation of the pentose substrate. Both reactions occur simultaneously and in competition at the same active site. This is Ribulose bisphosphate carboxylase (cbbM) from Rhodobacter capsulatus (Rhodopseudomonas capsulata).